Consider the following 521-residue polypeptide: Phosphoenolpyruvate carboxykinase (ATP) (521 aa).

Substrate-binding residues include arginine 52, tyrosine 186, and lysine 192. ATP-binding positions include lysine 192, histidine 211, and 227–235 (GLSGTGKTT). Mn(2+) contacts are provided by lysine 192 and histidine 211. Position 248 (aspartate 248) interacts with Mn(2+). ATP is bound by residues glutamate 276, arginine 313, 432–433 (RI), and threonine 438. Arginine 313 contributes to the substrate binding site.

The protein belongs to the phosphoenolpyruvate carboxykinase (ATP) family. Mn(2+) serves as cofactor.

It is found in the cytoplasm. The enzyme catalyses oxaloacetate + ATP = phosphoenolpyruvate + ADP + CO2. Its pathway is carbohydrate biosynthesis; gluconeogenesis. In terms of biological role, involved in the gluconeogenesis. Catalyzes the conversion of oxaloacetate (OAA) to phosphoenolpyruvate (PEP) through direct phosphoryl transfer between the nucleoside triphosphate and OAA. This is Phosphoenolpyruvate carboxykinase (ATP) from Caldanaerobacter subterraneus subsp. tengcongensis (strain DSM 15242 / JCM 11007 / NBRC 100824 / MB4) (Thermoanaerobacter tengcongensis).